The sequence spans 1184 residues: Fibulin-2 (1184 aa).

The signal sequence occupies residues Met1–Ala27. The subdomain NA (Cys-rich) stretch occupies residues Ala28–Cys177. Residues Ala28–Thr444 are n. The segment at His178 to Thr444 is subdomain NB (Cys-free). Residue Asn180 is glycosylated (N-linked (GlcNAc...) asparagine). Disordered stretches follow at residues Val221–Thr293 and Ile399–Ser437. Residues Gly224–Ser236 are compositionally biased toward gly residues. Residues Pro252–Gly261 show a composition bias toward low complexity. A compositionally biased stretch (acidic residues) spans Asp276–Glu288. A Phosphoserine modification is found at Ser277. Over residues Pro423–Gly436 the composition is skewed to polar residues. 38 disulfides stabilise this stretch: Cys445–Cys472, Cys446–Cys479, Cys459–Cys480, Cys489–Cys518, Cys502–Cys519, Cys521–Cys545, Cys522–Cys552, Cys535–Cys553, Cys608–Cys620, Cys616–Cys629, Cys631–Cys644, Cys683–Cys693, Cys689–Cys702, Cys704–Cys717, Cys723–Cys736, Cys730–Cys745, Cys751–Cys762, Cys768–Cys781, Cys775–Cys790, Cys796–Cys808, Cys814–Cys827, Cys821–Cys836, Cys843–Cys856, Cys862–Cys875, Cys869–Cys884, Cys886–Cys899, Cys905–Cys917, Cys913–Cys926, Cys928–Cys941, Cys947–Cys956, Cys952–Cys965, Cys967–Cys980, Cys986–Cys998, Cys994–Cys1007, Cys1009–Cys1023, Cys1029–Cys1042, Cys1036–Cys1051, and Cys1056–Cys1068. 3 consecutive Anaphylatoxin-like domains span residues Cys445 to Cys480, Ser488 to Cys519, and Cys521 to Cys553. An N-linked (GlcNAc...) asparagine glycan is attached at Asn507. In terms of domain architecture, EGF-like 1; calcium-binding spans Asp604–Arg645. Positions Gln679 to Glu718 constitute an EGF-like 2 domain. The region spanning Asp719–Glu763 is the EGF-like 3; calcium-binding domain. The 46-residue stretch at Asp764–Val809 folds into the EGF-like 4; calcium-binding domain. The EGF-like 5; calcium-binding domain occupies Asp810–Val857. One can recognise an EGF-like 6; calcium-binding domain in the interval Asp858 to Ile900. Residues Asp901 to Glu942 enclose the EGF-like 7; calcium-binding domain. In terms of domain architecture, EGF-like 8; calcium-binding spans Asp943–Thr981. Residues Asp982–Lys1024 enclose the EGF-like 9; calcium-binding domain. An EGF-like 10; calcium-binding domain is found at Asp1025–Glu1069. N-linked (GlcNAc...) asparagine glycosylation occurs at Asn1035. A domain III region spans residues Arg1070–Leu1184.

Belongs to the fibulin family. Homotrimer; disulfide-linked. Interacts with LAMA2. Interacts with FBN1 (via N-terminal domain). Forms a ternary complex with ELN and FBN1. In terms of processing, O-glycosylated with core 1 or possibly core 8 glycans. It is unsure if the O-glycosylation is on Thr-347 or Ser-348. As to expression, component of both basement membranes and other connective tissues. Expressed in heart, placenta and ovary.

The protein localises to the secreted. It is found in the extracellular space. Its subcellular location is the extracellular matrix. Functionally, its binding to fibronectin and some other ligands is calcium dependent. May act as an adapter that mediates the interaction between FBN1 and ELN. This Homo sapiens (Human) protein is Fibulin-2 (FBLN2).